A 437-amino-acid polypeptide reads, in one-letter code: Adenylosuccinate synthetase (437 aa).

GTP is bound by residues 12-18 (GDEGKGK) and 40-42 (GHT). Asp-13 serves as the catalytic Proton acceptor. Mg(2+)-binding residues include Asp-13 and Gly-40. Residues 13–16 (DEGK), 38–41 (NAGH), Thr-128, Arg-142, Gln-223, Thr-238, and Arg-302 contribute to the IMP site. His-41 (proton donor) is an active-site residue. 298–304 (TTTGRKR) contributes to the substrate binding site. Residues Arg-304, 330–332 (KLD), and 412–414 (SLG) contribute to the GTP site.

It belongs to the adenylosuccinate synthetase family. As to quaternary structure, homodimer. Mg(2+) serves as cofactor.

Its subcellular location is the cytoplasm. The catalysed reaction is IMP + L-aspartate + GTP = N(6)-(1,2-dicarboxyethyl)-AMP + GDP + phosphate + 2 H(+). It functions in the pathway purine metabolism; AMP biosynthesis via de novo pathway; AMP from IMP: step 1/2. In terms of biological role, plays an important role in the de novo pathway of purine nucleotide biosynthesis. Catalyzes the first committed step in the biosynthesis of AMP from IMP. This is Adenylosuccinate synthetase from Trichodesmium erythraeum (strain IMS101).